Consider the following 906-residue polypeptide: Protein translocase subunit SecA (906 aa).

ATP-binding positions include Q86, 104-108, and D511; that span reads GEGKT. Basic and acidic residues-rich tracts occupy residues 853–865 and 877–888; these read HESV…RHDE and VRREGPKVKRND. The segment at 853–906 is disordered; sequence HESVIDNNQRHDEDEQEEAPKVQQVRREGPKVKRNDPCPCGSGKKYKQCHGKVE. Zn(2+) contacts are provided by C890, C892, C901, and H902. Basic residues predominate over residues 896–906; sequence KKYKQCHGKVE.

Belongs to the SecA family. As to quaternary structure, monomer and homodimer. Part of the essential Sec protein translocation apparatus which comprises SecA, SecYEG and auxiliary proteins SecDF-YajC and YidC. The cofactor is Zn(2+).

The protein resides in the cell inner membrane. The protein localises to the cytoplasm. The enzyme catalyses ATP + H2O + cellular proteinSide 1 = ADP + phosphate + cellular proteinSide 2.. In terms of biological role, part of the Sec protein translocase complex. Interacts with the SecYEG preprotein conducting channel. Has a central role in coupling the hydrolysis of ATP to the transfer of proteins into and across the cell membrane, serving both as a receptor for the preprotein-SecB complex and as an ATP-driven molecular motor driving the stepwise translocation of polypeptide chains across the membrane. The chain is Protein translocase subunit SecA from Francisella tularensis subsp. holarctica (strain OSU18).